The chain runs to 247 residues: Cell division protein ZapD (247 aa).

It belongs to the ZapD family. In terms of assembly, interacts with FtsZ.

The protein localises to the cytoplasm. Its function is as follows. Cell division factor that enhances FtsZ-ring assembly. Directly interacts with FtsZ and promotes bundling of FtsZ protofilaments, with a reduction in FtsZ GTPase activity. The sequence is that of Cell division protein ZapD from Shigella dysenteriae serotype 1 (strain Sd197).